We begin with the raw amino-acid sequence, 280 residues long: Mitochondrial outer membrane protein porin 2 (280 aa).

The protein belongs to the eukaryotic mitochondrial porin (TC 1.B.8.1) family. In terms of tissue distribution, expressed in roots, stems, leaves, palea, lemma and pollen.

The protein resides in the mitochondrion outer membrane. Forms a channel through the mitochondrial outer membrane that allows diffusion of small hydrophilic molecules. The channel adopts an open conformation at low or zero membrane potential and a closed conformation at potentials above 30-40 mV. The open state has a weak anion selectivity whereas the closed state is cation-selective. The protein is Mitochondrial outer membrane protein porin 2 (VDAC2) of Oryza sativa subsp. japonica (Rice).